The following is a 129-amino-acid chain: Glycine cleavage system H protein (129 aa).

In terms of domain architecture, Lipoyl-binding spans 24–106 (TYTVGITEHA…YAGGWIFKIK (83 aa)). An N6-lipoyllysine modification is found at Lys65.

The protein belongs to the GcvH family. As to quaternary structure, the glycine cleavage system is composed of four proteins: P, T, L and H. Requires (R)-lipoate as cofactor.

Its function is as follows. The glycine cleavage system catalyzes the degradation of glycine. The H protein shuttles the methylamine group of glycine from the P protein to the T protein. This chain is Glycine cleavage system H protein, found in Escherichia coli O127:H6 (strain E2348/69 / EPEC).